Reading from the N-terminus, the 370-residue chain is Glutamate 5-kinase (370 aa).

Lysine 17 is an ATP binding site. Residues serine 56, aspartate 143, and asparagine 155 each contribute to the substrate site. 175–176 (SD) is a binding site for ATP. The 78-residue stretch at 280-357 (RGTIRVDAGA…AEIVAILGYS (78 aa)) folds into the PUA domain.

This sequence belongs to the glutamate 5-kinase family.

It is found in the cytoplasm. The enzyme catalyses L-glutamate + ATP = L-glutamyl 5-phosphate + ADP. It participates in amino-acid biosynthesis; L-proline biosynthesis; L-glutamate 5-semialdehyde from L-glutamate: step 1/2. In terms of biological role, catalyzes the transfer of a phosphate group to glutamate to form L-glutamate 5-phosphate. In Cereibacter sphaeroides (strain ATCC 17023 / DSM 158 / JCM 6121 / CCUG 31486 / LMG 2827 / NBRC 12203 / NCIMB 8253 / ATH 2.4.1.) (Rhodobacter sphaeroides), this protein is Glutamate 5-kinase.